A 323-amino-acid polypeptide reads, in one-letter code: Aspartate carbamoyltransferase catalytic subunit (323 aa).

Residues Arg55 and Thr56 each contribute to the carbamoyl phosphate site. Lys83 lines the L-aspartate pocket. Residues Arg105, His138, and Gln141 each contribute to the carbamoyl phosphate site. Residues Arg181 and Arg235 each contribute to the L-aspartate site. Residues Gly276 and Pro277 each coordinate carbamoyl phosphate.

The protein belongs to the aspartate/ornithine carbamoyltransferase superfamily. ATCase family. As to quaternary structure, heterododecamer (2C3:3R2) of six catalytic PyrB chains organized as two trimers (C3), and six regulatory PyrI chains organized as three dimers (R2).

The catalysed reaction is carbamoyl phosphate + L-aspartate = N-carbamoyl-L-aspartate + phosphate + H(+). It functions in the pathway pyrimidine metabolism; UMP biosynthesis via de novo pathway; (S)-dihydroorotate from bicarbonate: step 2/3. Functionally, catalyzes the condensation of carbamoyl phosphate and aspartate to form carbamoyl aspartate and inorganic phosphate, the committed step in the de novo pyrimidine nucleotide biosynthesis pathway. The chain is Aspartate carbamoyltransferase catalytic subunit from Corynebacterium aurimucosum (strain ATCC 700975 / DSM 44827 / CIP 107346 / CN-1) (Corynebacterium nigricans).